The chain runs to 88 residues: MGTARFLSAVLLLSVLLMVTFPALLSAEYHDGRVDICSLPSDSGDCLRFFEMWYFDGTTCTKFVYGGYGGNGNRFPTEKACMKRCVKA.

Residues 1–27 (MGTARFLSAVLLLSVLLMVTFPALLSA) form the signal peptide. Positions 28–33 (EYHDGR) are excised as a propeptide. Positions 37–85 (CSLPSDSGDCLRFFEMWYFDGTTCTKFVYGGYGGNGNRFPTEKACMKRC) constitute a BPTI/Kunitz inhibitor domain. Intrachain disulfides connect C37–C85 and C60–C81.

This sequence belongs to the venom Kunitz-type family. 03 (sub-Kunitz) subfamily. Expressed by the venom gland.

The protein localises to the secreted. Serine protease inhibitor that inhibits trypsin at a molar ratio of 1:1. The sequence is that of Kunitz-type U15-theraphotoxin-Hs1d from Cyriopagopus schmidti (Chinese bird spider).